Reading from the N-terminus, the 235-residue chain is Orotidine 5'-phosphate decarboxylase (235 aa).

Residues D12, K34, 61 to 70 (DMKLLDIDNT), T116, R177, Q186, G206, and R207 each bind substrate. The active-site Proton donor is K63.

Belongs to the OMP decarboxylase family. Type 1 subfamily. Homodimer.

The catalysed reaction is orotidine 5'-phosphate + H(+) = UMP + CO2. The protein operates within pyrimidine metabolism; UMP biosynthesis via de novo pathway; UMP from orotate: step 2/2. Functionally, catalyzes the decarboxylation of orotidine 5'-monophosphate (OMP) to uridine 5'-monophosphate (UMP). The sequence is that of Orotidine 5'-phosphate decarboxylase from Rhizobium johnstonii (strain DSM 114642 / LMG 32736 / 3841) (Rhizobium leguminosarum bv. viciae).